The primary structure comprises 293 residues: 4-hydroxy-tetrahydrodipicolinate synthase (293 aa).

Thr47 lines the pyruvate pocket. The active-site Proton donor/acceptor is the Tyr136. The active-site Schiff-base intermediate with substrate is Lys164. Ile206 lines the pyruvate pocket.

The protein belongs to the DapA family. Homotetramer; dimer of dimers.

The protein localises to the cytoplasm. The catalysed reaction is L-aspartate 4-semialdehyde + pyruvate = (2S,4S)-4-hydroxy-2,3,4,5-tetrahydrodipicolinate + H2O + H(+). Its pathway is amino-acid biosynthesis; L-lysine biosynthesis via DAP pathway; (S)-tetrahydrodipicolinate from L-aspartate: step 3/4. Its function is as follows. Catalyzes the condensation of (S)-aspartate-beta-semialdehyde [(S)-ASA] and pyruvate to 4-hydroxy-tetrahydrodipicolinate (HTPA). The sequence is that of 4-hydroxy-tetrahydrodipicolinate synthase from Listeria welshimeri serovar 6b (strain ATCC 35897 / DSM 20650 / CCUG 15529 / CIP 8149 / NCTC 11857 / SLCC 5334 / V8).